A 241-amino-acid chain; its full sequence is MIDWLYSYPPLYPGILLKRYKRFFADVQLASGEVVTAHCPNTGPMTGVSTLGSVVQLSKSANPKRKLAYTLELIQVHDNEPTWVGVNTALPNQIVKLALAKYLFPELGSYNHIKSEVVYGVDKKSRVDFFLTGSDTERPIYLEVKNTTWAKGTLALFPDTETTRGQKHLRELMTLLPQTRSVMLYFINRGDCTEFAPGDSTDPIYGKLLREAIALGLEVLPCRFDVTPEGIRYLGLAKLVI.

The protein belongs to the SfsA family.

This Trichormus variabilis (strain ATCC 29413 / PCC 7937) (Anabaena variabilis) protein is Sugar fermentation stimulation protein homolog.